The sequence spans 943 residues: U3 small nucleolar RNA-associated protein 12 (943 aa).

WD repeat units lie at residues 77-107 (AKPAECTYLEAHKDTDLLAVGYADGVIKVWD), 119-149 (GHKAAITLLQFDGTGTRLISGSKDSNIIVWD), 161-190 (SHKDSITGFWCQGEDWLISTSKDGMIKLWD), 202-230 (AHTGECWGLAVKDDLLITTGTDSQVKIWK), 389-418 (GQRTDVRSIDISDDNKLLATASNGSLKIWN), 428-458 (FECGYALTCKFLPGGLLVILGTRNGELQLFD), 471-501 (AHDAAIWSLDLTSDGKRLVTGSADKTVKFWD), 571-601 (GHKLPVLSIDISFDSKMIITSSADKNIKIWG), 613-643 (AHQDSIMNVKFLPQSHNFFSCSKDAVVKYWD), and 655-685 (AHQSEVWALAVATDGGFVVSSSHDHSIRIWE). Positions 715–739 (EGNGDDAFKADASGEGVEDEASGVH) are disordered.

This sequence belongs to the WD repeat WDR3/UTP12 family. As to quaternary structure, interacts with snoRNA U3. Interacts with MPP10. Component of the ribosomal small subunit (SSU) processome composed of at least 40 protein subunits and snoRNA U3.

Its subcellular location is the nucleus. The protein localises to the nucleolus. Functionally, involved in nucleolar processing of pre-18S ribosomal RNA. The chain is U3 small nucleolar RNA-associated protein 12 (DIP2) from Saccharomyces cerevisiae (strain ATCC 204508 / S288c) (Baker's yeast).